Here is a 96-residue protein sequence, read N- to C-terminus: Large ribosomal subunit protein uL23cz (96 aa).

It belongs to the universal ribosomal protein uL23 family. As to quaternary structure, part of the 50S ribosomal subunit.

It is found in the plastid. The protein localises to the chloroplast. Its function is as follows. Binds to 23S rRNA. The chain is Large ribosomal subunit protein uL23cz (rpl23-A) from Sorghum bicolor (Sorghum).